Here is a 110-residue protein sequence, read N- to C-terminus: uncharacterized protein (110 aa).

This is an uncharacterized protein from Archaeoglobus fulgidus (strain ATCC 49558 / DSM 4304 / JCM 9628 / NBRC 100126 / VC-16).